The following is a 452-amino-acid chain: Pup--protein ligase (452 aa).

Glu9 contributes to the Mg(2+) binding site. Arg53 is an ATP binding site. Tyr55 is a binding site for Mg(2+). Asp57 serves as the catalytic Proton acceptor. A Mg(2+)-binding site is contributed by Glu63. Residues Thr66 and Trp419 each contribute to the ATP site.

This sequence belongs to the Pup ligase/Pup deamidase family. Pup-conjugating enzyme subfamily.

It catalyses the reaction ATP + [prokaryotic ubiquitin-like protein]-L-glutamate + [protein]-L-lysine = ADP + phosphate + N(6)-([prokaryotic ubiquitin-like protein]-gamma-L-glutamyl)-[protein]-L-lysine.. Its pathway is protein degradation; proteasomal Pup-dependent pathway. It functions in the pathway protein modification; protein pupylation. Catalyzes the covalent attachment of the prokaryotic ubiquitin-like protein modifier Pup to the proteasomal substrate proteins, thereby targeting them for proteasomal degradation. This tagging system is termed pupylation. The ligation reaction involves the side-chain carboxylate of the C-terminal glutamate of Pup and the side-chain amino group of a substrate lysine. This Salinispora tropica (strain ATCC BAA-916 / DSM 44818 / JCM 13857 / NBRC 105044 / CNB-440) protein is Pup--protein ligase.